Reading from the N-terminus, the 390-residue chain is Bifunctional enzyme IspD/IspF (390 aa).

Residues Met-1 to Ile-229 are 2-C-methyl-D-erythritol 4-phosphate cytidylyltransferase. A 2-C-methyl-D-erythritol 2,4-cyclodiphosphate synthase region spans residues Arg-230–Glu-390. Residues Asp-236 and His-238 each contribute to the a divalent metal cation site. 4-CDP-2-C-methyl-D-erythritol 2-phosphate contacts are provided by residues Asp-236–His-238 and His-262–Ser-263. Position 270 (His-270) interacts with a divalent metal cation. 4-CDP-2-C-methyl-D-erythritol 2-phosphate contacts are provided by residues Asp-284–Gly-286, Thr-360–Glu-363, Phe-367, and Arg-370.

The protein in the N-terminal section; belongs to the IspD/TarI cytidylyltransferase family. IspD subfamily. It in the C-terminal section; belongs to the IspF family. Requires a divalent metal cation as cofactor.

It catalyses the reaction 2-C-methyl-D-erythritol 4-phosphate + CTP + H(+) = 4-CDP-2-C-methyl-D-erythritol + diphosphate. The enzyme catalyses 4-CDP-2-C-methyl-D-erythritol 2-phosphate = 2-C-methyl-D-erythritol 2,4-cyclic diphosphate + CMP. The protein operates within isoprenoid biosynthesis; isopentenyl diphosphate biosynthesis via DXP pathway; isopentenyl diphosphate from 1-deoxy-D-xylulose 5-phosphate: step 2/6. Its pathway is isoprenoid biosynthesis; isopentenyl diphosphate biosynthesis via DXP pathway; isopentenyl diphosphate from 1-deoxy-D-xylulose 5-phosphate: step 4/6. Bifunctional enzyme that catalyzes the formation of 4-diphosphocytidyl-2-C-methyl-D-erythritol from CTP and 2-C-methyl-D-erythritol 4-phosphate (MEP) (IspD), and catalyzes the conversion of 4-diphosphocytidyl-2-C-methyl-D-erythritol 2-phosphate (CDP-ME2P) to 2-C-methyl-D-erythritol 2,4-cyclodiphosphate (ME-CPP) with a corresponding release of cytidine 5-monophosphate (CMP) (IspF). This Brucella abortus biovar 1 (strain 9-941) protein is Bifunctional enzyme IspD/IspF.